Consider the following 411-residue polypeptide: POU domain, class 4, transcription factor 2 (411 aa).

Residues 29–95 form a disordered region; that stretch reads LHSASPGSSA…SEAMRRACLP (67 aa). Low complexity predominate over residues 31–52; that stretch reads SASPGSSAPAAPSASSPSSSSN. Composition is skewed to gly residues over residues 53–68 and 76–86; these read AGGGGGGGGGGGGGGR and GSGGSGGGGGS. Positions 93 to 239 are required for transcriptional activation; that stretch reads CLPTPPSNIF…MHQAALSMAH (147 aa). The POU-IV box signature appears at 112–121; it reads RAEALAAVDI. Residues 154–168 show a composition bias toward low complexity; sequence SAASSSSVPISHPSA. A disordered region spans residues 154–190; it reads SAASSSSVPISHPSALAGTHHHHHHHHHHHHQPHQAL. Over residues 172-186 the composition is skewed to basic residues; that stretch reads THHHHHHHHHHHHQP. The Nuclear speckle targeting signal signature appears at 173–187; it reads HHHHHHHHHHHHQPH. The tract at residues 240–411 is required for DNA-binding and transcriptional repression; that stretch reads AHGLPSHMGC…QKRMKYSAGI (172 aa). In terms of domain architecture, POU-specific spans 252-329; the sequence is DVDADPRDLE…ILQAWLEEAE (78 aa). The segment at residues 347 to 406 is a DNA-binding region (homeobox); the sequence is KKRKRTSIAAPEKRSLEAYFAIQPRPSSEKIAAIAEKLDLKKNVVRVWFCNQRQKQKRMK.

It belongs to the POU transcription factor family. Class-4 subfamily. Isoform 2: Interacts with POU4F1 isoform 1; this interaction inhibits both POU4F1 DNA-binding and transcriptional activities. Isoform 2: Interacts (C-terminus) with ESR1 (via DNA-binding domain); this interaction increases the estrogen receptor ESR1 transcriptional activity in a DNA- and ligand 17-beta-estradiol-independent manner. Isoform 2: Interacts (via C-terminus) with TP53 (via N-terminus). Interacts with DLX1 (via homeobox DNA-binding domain); this interaction suppresses DLX1-mediated transcriptional activity in postnatal retina enhancing retinal ganglion cell (RGC) differentiation. Interacts with DLX2 (via homeobox DNA-binding domain); this interaction enhances RGC differentiation. Isoform 1: Interacts (via C-terminus) with ISL1 (via C-terminus). Isoform 1: Interacts with ISL2. Isoform 1: Interacts with LHX2. Expressed in retinal ganglion cells (RGCs). Expressed in mature osteoclasts. Expressed in cells of layers of the superior colliculus and the adjacent periaqueductal gray (at protein level). Expressed in the brain, peripheral sensory nervous system and retina. Expressed in the optical, intermediate, and deep gray areas of the superior colliculus, the dorsal column of the mesencephalic and pontine central gray, and the lateral interpeduncular nucleus of the brain. Expressed predominantly in postmitotic, terminally differentiated neurons. Expressed in ganglion cell layer (GCL) of the retina.

The protein localises to the nucleus. Its subcellular location is the nucleus speckle. It localises to the cytoplasm. Tissue-specific DNA-binding transcription factor involved in the development and differentiation of target cells. Functions either as activator or repressor by modulating the rate of target gene transcription through RNA polymerase II enzyme in a promoter-dependent manner. Binds to the consensus octamer motif 5'-AT[A/T]A[T/A]T[A/T]A-3' of promoter of target genes. Plays a fundamental role in the gene regulatory network essential for retinal ganglion cell (RGC) differentiation. Binds to an octamer site to form a ternary complex with ISL1; cooperates positively with ISL1 and ISL2 to potentiate transcriptional activation of RGC target genes being involved in RGC fate commitment in the developing retina and RGC axon formation and pathfinding. Inhibits DLX1 and DLX2 transcriptional activities preventing DLX1- and DLX2-mediated ability to promote amacrine cell fate specification. In cooperation with TP53 potentiates transcriptional activation of BAX promoter activity increasing neuronal cell apoptosis. Negatively regulates BAX promoter activity in the absence of TP53. Acts as a transcriptional coactivator via its interaction with the transcription factor ESR1 by enhancing its effect on estrogen response element (ERE)-containing promoter. Antagonizes the transcriptional stimulatory activity of POU4F1 by preventing its binding to an octamer motif. Involved in TNFSF11-mediated terminal osteoclast differentiation. The chain is POU domain, class 4, transcription factor 2 from Mus musculus (Mouse).